The sequence spans 360 residues: Peptide chain release factor 1 (360 aa).

Gln235 bears the N5-methylglutamine mark.

Belongs to the prokaryotic/mitochondrial release factor family. Methylated by PrmC. Methylation increases the termination efficiency of RF1.

The protein localises to the cytoplasm. Its function is as follows. Peptide chain release factor 1 directs the termination of translation in response to the peptide chain termination codons UAG and UAA. The sequence is that of Peptide chain release factor 1 from Burkholderia cenocepacia (strain HI2424).